The chain runs to 413 residues: Multifunctional CCA protein (413 aa).

Residues Gly8 and Arg11 each contribute to the ATP site. The CTP site is built by Gly8 and Arg11. Mg(2+)-binding residues include Asp21 and Asp23. Residues Arg91, Arg137, and Arg140 each contribute to the ATP site. Arg91, Arg137, and Arg140 together coordinate CTP. The 102-residue stretch at 228-329 (TGLHTLMTVT…VKLFDSIDAW (102 aa)) folds into the HD domain.

Belongs to the tRNA nucleotidyltransferase/poly(A) polymerase family. Bacterial CCA-adding enzyme type 1 subfamily. Monomer. Can also form homodimers and oligomers. Requires Mg(2+) as cofactor. It depends on Ni(2+) as a cofactor.

It carries out the reaction a tRNA precursor + 2 CTP + ATP = a tRNA with a 3' CCA end + 3 diphosphate. It catalyses the reaction a tRNA with a 3' CCA end + 2 CTP + ATP = a tRNA with a 3' CCACCA end + 3 diphosphate. Catalyzes the addition and repair of the essential 3'-terminal CCA sequence in tRNAs without using a nucleic acid template. Adds these three nucleotides in the order of C, C, and A to the tRNA nucleotide-73, using CTP and ATP as substrates and producing inorganic pyrophosphate. tRNA 3'-terminal CCA addition is required both for tRNA processing and repair. Also involved in tRNA surveillance by mediating tandem CCA addition to generate a CCACCA at the 3' terminus of unstable tRNAs. While stable tRNAs receive only 3'-terminal CCA, unstable tRNAs are marked with CCACCA and rapidly degraded. The sequence is that of Multifunctional CCA protein from Klebsiella pneumoniae subsp. pneumoniae (strain ATCC 700721 / MGH 78578).